We begin with the raw amino-acid sequence, 131 residues long: UPF0102 protein AZC_4471 (131 aa).

This sequence belongs to the UPF0102 family.

The chain is UPF0102 protein AZC_4471 from Azorhizobium caulinodans (strain ATCC 43989 / DSM 5975 / JCM 20966 / LMG 6465 / NBRC 14845 / NCIMB 13405 / ORS 571).